The primary structure comprises 136 residues: Histone H3.1 (136 aa).

A disordered region spans residues 1–43 (MARTKQTARKSTGGKAPRKQLATKAARKSAPATGGVKKPHRYR). Asymmetric dimethylarginine; by PRMT6; alternate is present on R3. R3 carries the citrulline; alternate modification. A Phosphothreonine; by HASPIN and VRK1 modification is found at T4. An Allysine; alternate modification is found at K5. An N6,N6,N6-trimethyllysine; alternate modification is found at K5. K5 carries the post-translational modification N6,N6-dimethyllysine; alternate. K5 is modified (N6-(2-hydroxyisobutyryl)lysine; alternate). At K5 the chain carries N6-(beta-hydroxybutyryl)lysine; alternate. K5 carries the N6-acetyllysine; alternate modification. The residue at position 5 (K5) is an N6-crotonyllysine; alternate. K5 carries the post-translational modification N6-methyllysine; alternate. 5-glutamyl dopamine; alternate is present on Q6. Residue Q6 is modified to 5-glutamyl serotonin; alternate. T7 is modified (phosphothreonine; by PKC). A Citrulline; alternate modification is found at R9. R9 carries the post-translational modification Symmetric dimethylarginine; by PRMT5; alternate. Residue K10 is modified to N6,N6,N6-trimethyllysine; alternate. At K10 the chain carries N6,N6-dimethyllysine; alternate. K10 is subject to N6-(2-hydroxyisobutyryl)lysine; alternate. K10 bears the N6-(beta-hydroxybutyryl)lysine; alternate mark. K10 carries the post-translational modification N6-acetyllysine; alternate. An N6-crotonyllysine; alternate modification is found at K10. K10 carries the post-translational modification N6-methyllysine; alternate. K10 is subject to N6-butyryllysine; alternate. K10 carries the N6-lactoyllysine; alternate modification. S11 carries the post-translational modification ADP-ribosylserine; alternate. S11 is modified (phosphoserine; alternate; by AURKB, AURKC, RPS6KA3, RPS6KA4 and RPS6KA5). T12 is subject to Phosphothreonine; by PKC and CHEK1. The residue at position 15 (K15) is an N6-(2-hydroxyisobutyryl)lysine; alternate. K15 is modified (N6-(beta-hydroxybutyryl)lysine; alternate). Position 15 is an N6-acetyllysine; alternate (K15). Residue K15 is modified to N6-lactoyllysine; alternate. An N6-glutaryllysine; alternate modification is found at K15. N6-succinyllysine; alternate is present on K15. R18 carries the citrulline; alternate modification. R18 is modified (asymmetric dimethylarginine; by CARM1; alternate). K19 and K24 each carry N6-(2-hydroxyisobutyryl)lysine; alternate. 2 positions are modified to N6-(beta-hydroxybutyryl)lysine; alternate: K19 and K24. An N6-acetyllysine; alternate mark is found at K19 and K24. Residues K19 and K24 each carry the N6-crotonyllysine; alternate modification. An N6-methyllysine; alternate mark is found at K19 and K24. An N6-butyryllysine; alternate mark is found at K19 and K24. K19 and K24 each carry N6-lactoyllysine; alternate. 2 positions are modified to N6-glutaryllysine; alternate: K19 and K24. Residue K19 is the site of N6-decanoyllysine attachment. Residue R27 is modified to Citrulline. K28 carries the N6,N6,N6-trimethyllysine; alternate modification. Residue K28 is modified to N6,N6-dimethyllysine; alternate. Position 28 is an N6-(2-hydroxyisobutyryl)lysine; alternate (K28). K28 is subject to N6-(beta-hydroxybutyryl)lysine; alternate. K28 is subject to N6-acetyllysine; alternate. An N6-crotonyllysine; alternate modification is found at K28. An N6-methyllysine; alternate modification is found at K28. At K28 the chain carries N6-lactoyllysine; alternate. An N6-glutaryllysine; alternate modification is found at K28. S29 carries the post-translational modification ADP-ribosylserine; alternate. At S29 the chain carries Phosphoserine; alternate; by AURKB, AURKC and RPS6KA5. At K37 the chain carries N6,N6,N6-trimethyllysine; alternate. The residue at position 37 (K37) is an N6,N6-dimethyllysine; alternate. An N6-(2-hydroxyisobutyryl)lysine; alternate modification is found at K37. The residue at position 37 (K37) is an N6-acetyllysine; alternate. At K37 the chain carries N6-methyllysine; alternate. An N6-methyllysine modification is found at K38. At Y42 the chain carries Phosphotyrosine. An N6,N6,N6-trimethyllysine; alternate modification is found at K57. The residue at position 57 (K57) is an N6-(2-hydroxyisobutyryl)lysine; alternate. K57 is modified (N6-(beta-hydroxybutyryl)lysine; alternate). K57 carries the N6-acetyllysine; alternate modification. Position 57 is an N6-crotonyllysine; alternate (K57). Position 57 is an N6-lactoyllysine; alternate (K57). The residue at position 57 (K57) is an N6-glutaryllysine; alternate. The residue at position 57 (K57) is an N6-succinyllysine; alternate. An N6-methyllysine; by EHMT2; alternate modification is found at K57. S58 is modified (phosphoserine). N6-(2-hydroxyisobutyryl)lysine; alternate is present on residues K65 and K80. N6-methyllysine; alternate is present on residues K65 and K80. K80 bears the N6,N6,N6-trimethyllysine; alternate mark. K80 carries the N6,N6-dimethyllysine; alternate modification. K80 is subject to N6-(beta-hydroxybutyryl)lysine; alternate. N6-acetyllysine; alternate is present on K80. N6-lactoyllysine; alternate is present on K80. Residue K80 is modified to N6-glutaryllysine; alternate. At K80 the chain carries N6-succinyllysine; alternate. Residue T81 is modified to Phosphothreonine. At S87 the chain carries Phosphoserine. T108 is subject to Phosphothreonine. 2 positions are modified to N6-acetyllysine; alternate: K116 and K123. Residues K116 and K123 each carry the N6-glutaryllysine; alternate modification. Residue K123 is modified to N6-(2-hydroxyisobutyryl)lysine; alternate. Residue K123 is modified to N6-(beta-hydroxybutyryl)lysine; alternate. The residue at position 123 (K123) is an N6-methyllysine; alternate. N6-succinyllysine; alternate is present on K123.

The protein belongs to the histone H3 family. The nucleosome is a histone octamer containing two molecules each of H2A, H2B, H3 and H4 assembled in one H3-H4 heterotetramer and two H2A-H2B heterodimers. The octamer wraps approximately 147 bp of DNA. Interacts with TONSL; CHAF1A; CHAF1B; MCM2 and DNAJC9. Interacts with NASP; NASP is a histone chaperone that stabilizes and maintains a soluble pool of Histone H3-H4 dimers. In terms of processing, acetylation is generally linked to gene activation. Acetylation on Lys-10 (H3K9ac) impairs methylation at Arg-9 (H3R8me2s). Acetylation on Lys-19 (H3K18ac) and Lys-24 (H3K24ac) favors methylation at Arg-18 (H3R17me). Acetylation at Lys-123 (H3K122ac) by EP300/p300 plays a central role in chromatin structure: localizes at the surface of the histone octamer and stimulates transcription, possibly by promoting nucleosome instability. Post-translationally, citrullination at Arg-9 (H3R8ci) and/or Arg-18 (H3R17ci) by PADI4 impairs methylation and represses transcription. Asymmetric dimethylation at Arg-18 (H3R17me2a) by CARM1 is linked to gene activation. Symmetric dimethylation at Arg-9 (H3R8me2s) by PRMT5 is linked to gene repression. Asymmetric dimethylation at Arg-3 (H3R2me2a) by PRMT6 is linked to gene repression and is mutually exclusive with H3 Lys-5 methylation (H3K4me2 and H3K4me3). H3R2me2a is present at the 3' of genes regardless of their transcription state and is enriched on inactive promoters, while it is absent on active promoters. In terms of processing, methylation at Lys-5 (H3K4me), Lys-37 (H3K36me) and Lys-80 (H3K79me) are linked to gene activation. Methylation at Lys-5 (H3K4me) facilitates subsequent acetylation of H3 and H4. Methylation at Lys-80 (H3K79me) is associated with DNA double-strand break (DSB) responses and is a specific target for TP53BP1. Methylation at Lys-10 (H3K9me) and Lys-28 (H3K27me) are linked to gene repression. Methylation at Lys-10 (H3K9me) is a specific target for HP1 proteins (CBX1, CBX3 and CBX5) and prevents subsequent phosphorylation at Ser-11 (H3S10ph) and acetylation of H3 and H4. Methylation at Lys-5 (H3K4me) and Lys-80 (H3K79me) require preliminary monoubiquitination of H2B at 'Lys-120'. Methylation at Lys-10 (H3K9me) and Lys-28 (H3K27me) are enriched in inactive X chromosome chromatin. Monomethylation at Lys-57 (H3K56me1) by EHMT2/G9A in G1 phase promotes interaction with PCNA and is required for DNA replication. Post-translationally, phosphorylated at Thr-4 (H3T3ph) by VRK1. Phosphorylated at Thr-4 (H3T3ph) by HASPIN during prophase and dephosphorylated during anaphase. Phosphorylation at Ser-11 (H3S10ph) by AURKB is crucial for chromosome condensation and cell-cycle progression during mitosis and meiosis. In addition phosphorylation at Ser-11 (H3S10ph) by RPS6KA4 and RPS6KA5 is important during interphase because it enables the transcription of genes following external stimulation, like mitogens, stress, growth factors or UV irradiation and result in the activation of genes, such as c-fos and c-jun. Phosphorylation at Ser-11 (H3S10ph), which is linked to gene activation, prevents methylation at Lys-10 (H3K9me) but facilitates acetylation of H3 and H4. Phosphorylation at Ser-11 (H3S10ph) by AURKB mediates the dissociation of HP1 proteins (CBX1, CBX3 and CBX5) from heterochromatin. Phosphorylation at Ser-11 (H3S10ph) is also an essential regulatory mechanism for neoplastic cell transformation. Phosphorylated at Ser-29 (H3S28ph) by MAP3K20 isoform 1, RPS6KA5 or AURKB during mitosis or upon ultraviolet B irradiation. Phosphorylation at Thr-7 (H3T6ph) by PRKCB is a specific tag for epigenetic transcriptional activation that prevents demethylation of Lys-5 (H3K4me) by LSD1/KDM1A. At centromeres, specifically phosphorylated at Thr-12 (H3T11ph) from prophase to early anaphase, by DAPK3 and PKN1. Phosphorylation at Thr-12 (H3T11ph) by PKN1 or isoform M2 of PKM (PKM2) is a specific tag for epigenetic transcriptional activation that promotes demethylation of Lys-10 (H3K9me) by KDM4C/JMJD2C. Phosphorylation at Thr-12 (H3T11ph) by chromatin-associated CHEK1 regulates the transcription of cell cycle regulatory genes by modulating acetylation of Lys-10 (H3K9ac). Phosphorylation at Tyr-42 (H3Y41ph) by JAK2 promotes exclusion of CBX5 (HP1 alpha) from chromatin. Monoubiquitinated by RAG1 in lymphoid cells, monoubiquitination is required for V(D)J recombination. Ubiquitinated by the CUL4-DDB-RBX1 complex in response to ultraviolet irradiation. This may weaken the interaction between histones and DNA and facilitate DNA accessibility to repair proteins. In terms of processing, lysine deamination at Lys-5 (H3K4all) to form allysine is mediated by LOXL2. Allysine formation by LOXL2 only takes place on H3K4me3 and results in gene repression. Post-translationally, crotonylation (Kcr) is specifically present in male germ cells and marks testis-specific genes in post-meiotic cells, including X-linked genes that escape sex chromosome inactivation in haploid cells. Crotonylation marks active promoters and enhancers and confers resistance to transcriptional repressors. It is also associated with post-meiotically activated genes on autosomes. Butyrylation of histones marks active promoters and competes with histone acetylation. It is present during late spermatogenesis. In terms of processing, succinylation at Lys-80 (H3K79succ) by KAT2A takes place with a maximum frequency around the transcription start sites of genes. It gives a specific tag for epigenetic transcription activation. Desuccinylation at Lys-123 (H3K122succ) by SIRT7 in response to DNA damage promotes chromatin condensation and double-strand breaks (DSBs) repair. Post-translationally, serine ADP-ribosylation by PARP1 or PARP2 constitutes the primary form of ADP-ribosylation of proteins in response to DNA damage. Serine ADP-ribosylation at Ser-11 (H3S10ADPr) promotes recruitment of CHD1L. H3S10ADPr is mutually exclusive with phosphorylation at Ser-11 (H3S10ph) and impairs acetylation at Lys-10 (H3K9ac). Serotonylated by TGM2 at Gln-6 (H3Q5ser) during serotonergic neuron differentiation. H3Q5ser is associated with trimethylation of Lys-5 (H3K4me3) and enhances general transcription factor IID (TFIID) complex-binding to H3K4me3, thereby facilitating transcription. In terms of processing, dopaminylated by TGM2 at Gln-6 (H3Q5dop) in ventral tegmental area (VTA) neurons. H3Q5dop mediates neurotransmission-independent role of nuclear dopamine by regulating relapse-related transcriptional plasticity in the reward system. Post-translationally, lactylated in macrophages by EP300/P300 by using lactoyl-CoA directly derived from endogenous or exogenous lactate, leading to stimulates gene transcription.

It is found in the nucleus. The protein localises to the chromosome. In terms of biological role, core component of nucleosome. Nucleosomes wrap and compact DNA into chromatin, limiting DNA accessibility to the cellular machineries which require DNA as a template. Histones thereby play a central role in transcription regulation, DNA repair, DNA replication and chromosomal stability. DNA accessibility is regulated via a complex set of post-translational modifications of histones, also called histone code, and nucleosome remodeling. This chain is Histone H3.1, found in Homo sapiens (Human).